The following is a 128-amino-acid chain: Small ribosomal subunit protein uS9c (128 aa).

The segment at 106–128 (SRIKERKKYGLKKARKAPQFSKR) is disordered. Residues 109-128 (KERKKYGLKKARKAPQFSKR) are compositionally biased toward basic residues.

It belongs to the universal ribosomal protein uS9 family.

The protein localises to the plastid. Its subcellular location is the chloroplast. This chain is Small ribosomal subunit protein uS9c (rps9), found in Cyanidium caldarium (Red alga).